We begin with the raw amino-acid sequence, 93 residues long: DNA/RNA-binding protein Alba 2 (93 aa).

Belongs to the histone-like Alba family.

It localises to the cytoplasm. It is found in the chromosome. Its function is as follows. Binds double-stranded DNA tightly but without sequence specificity. Involved in DNA compaction. This Methanopyrus kandleri (strain AV19 / DSM 6324 / JCM 9639 / NBRC 100938) protein is DNA/RNA-binding protein Alba 2.